Consider the following 453-residue polypeptide: Putative amino acid/polyamine transporter MPH_07630_2 (453 aa).

Transmembrane regions (helical) follow at residues 2–21, 30–50, and 81–101; these read IGFS…VLVV, VMIW…YSMA, and VCGW…NFIA. The N-linked (GlcNAc...) asparagine glycan is linked to Asn110. Transmembrane regions (helical) follow at residues 121-141 and 151-171; these read WHAV…SIFL and AILI…LATN. Asn186 carries an N-linked (GlcNAc...) asparagine glycan. Helical transmembrane passes span 193 to 213 and 231 to 251; these read AYAA…YDAP and IVMS…SLCF. N-linked (GlcNAc...) asparagine glycosylation occurs at Asn274. The next 4 helical transmembrane spans lie at 277-297, 330-350, 358-378, and 403-423; these read GSVA…LVCA, LGVP…FNSI, FNTV…IPLL, and GLLA…TFNF. N-linked (GlcNAc...) asparagine glycosylation is present at Asn435.

This sequence belongs to the amino acid-polyamine-organocation (APC) superfamily.

It localises to the membrane. This is Putative amino acid/polyamine transporter MPH_07630_2 from Macrophomina phaseolina (strain MS6) (Charcoal rot fungus).